The following is a 714-amino-acid chain: Fatty acid oxidation complex subunit alpha (714 aa).

The segment at 1–190 (MEMASAFTLN…KLGLVDDVVP (190 aa)) is enoyl-CoA hydratase. The 3-hydroxyacyl-CoA dehydrogenase stretch occupies residues 306-714 (APLNSVGILG…FWKTTATDLQ (409 aa)).

In the N-terminal section; belongs to the enoyl-CoA hydratase/isomerase family. It in the central section; belongs to the 3-hydroxyacyl-CoA dehydrogenase family. Heterotetramer of two alpha chains (FadJ) and two beta chains (FadI).

It is found in the cytoplasm. The enzyme catalyses a (3S)-3-hydroxyacyl-CoA = a (2E)-enoyl-CoA + H2O. The catalysed reaction is a 4-saturated-(3S)-3-hydroxyacyl-CoA = a (3E)-enoyl-CoA + H2O. It carries out the reaction a (3S)-3-hydroxyacyl-CoA + NAD(+) = a 3-oxoacyl-CoA + NADH + H(+). It catalyses the reaction (3S)-3-hydroxybutanoyl-CoA = (3R)-3-hydroxybutanoyl-CoA. Its pathway is lipid metabolism; fatty acid beta-oxidation. In terms of biological role, catalyzes the formation of a hydroxyacyl-CoA by addition of water on enoyl-CoA. Also exhibits 3-hydroxyacyl-CoA epimerase and 3-hydroxyacyl-CoA dehydrogenase activities. In Escherichia coli O6:H1 (strain CFT073 / ATCC 700928 / UPEC), this protein is Fatty acid oxidation complex subunit alpha.